A 104-amino-acid chain; its full sequence is Replication restart protein PriB (104 aa).

Residues 1-101 (MTNRLVLSGT…LHAEQIELID (101 aa)) form the SSB domain.

The protein belongs to the PriB family. In terms of assembly, homodimer. Interacts with PriA and DnaT. Component of the replication restart primosome. Primosome assembly occurs via a 'hand-off' mechanism. PriA binds to replication forks, subsequently PriB then DnaT bind; DnaT then displaces ssDNA to generate the helicase loading substrate.

Involved in the restart of stalled replication forks, which reloads the replicative helicase on sites other than the origin of replication; the PriA-PriB pathway is the major replication restart pathway. During primosome assembly it facilitates complex formation between PriA and DnaT on DNA; stabilizes PriA on DNA. Stimulates the DNA unwinding activity of PriA helicase. This Escherichia coli (strain ATCC 8739 / DSM 1576 / NBRC 3972 / NCIMB 8545 / WDCM 00012 / Crooks) protein is Replication restart protein PriB.